We begin with the raw amino-acid sequence, 204 residues long: Ricin B-like lectin R40G3 (204 aa).

A Ricin B-type lectin domain is found at 54-200 (TVKVYCRANP…CEGDNQRWKI (147 aa)).

As to expression, expressed in shoots and lamina.

In terms of biological role, lectin which binds carbohydrates in vitro. Interacts through its lectin domain with glycan structures containing specific motifs. In Oryza sativa subsp. japonica (Rice), this protein is Ricin B-like lectin R40G3.